The following is a 289-amino-acid chain: Secretory carrier-associated membrane protein (289 aa).

Positions 1-65 are disordered; that stretch reads MAGRYDPNPF…TSTDGKKKER (65 aa). The Cytoplasmic segment spans residues 1–123; that stretch reads MAGRYDPNPF…EIPIHLRTLQ (123 aa). Over residues 16–31 the composition is skewed to polar residues; sequence NPFSNPRSAASATNSR. A coiled-coil region spans residues 59–98; the sequence is DGKKKERDLQAKEAELRKREQEVRRKEEAIARAGIVIEEK. The next 4 helical transmembrane spans lie at 124–144, 156–176, 191–211, and 239–259; these read YVAFFSLLGLVLCLTWNVVSV, IWFLAIIYFIAGVPGAYALWY, FGWFFMFYLLHIGFCILAAVA, and IFYFIGFGFFCLETLISIWVI. The Cytoplasmic segment spans residues 260–289; it reads QQVYMHFRGGGKTAEMKREAALGAMGAALR.

The protein belongs to the SCAMP family.

The protein resides in the cell membrane. The protein localises to the cytoplasmic vesicle. It is found in the secretory vesicle membrane. Its function is as follows. Probably involved in membrane trafficking. This chain is Secretory carrier-associated membrane protein (PSAM2), found in Pisum sativum (Garden pea).